The primary structure comprises 476 residues: Eukaryotic translation initiation factor 3 subunit L (476 aa).

One can recognise a PCI domain in the interval 257 to 452 (DAIRMFSHIL…DLDYALENDL (196 aa)).

It belongs to the eIF-3 subunit L family. As to quaternary structure, component of the eukaryotic translation initiation factor 3 (eIF-3) complex.

It is found in the cytoplasm. Functionally, component of the eukaryotic translation initiation factor 3 (eIF-3) complex, which is involved in protein synthesis of a specialized repertoire of mRNAs and, together with other initiation factors, stimulates binding of mRNA and methionyl-tRNAi to the 40S ribosome. The eIF-3 complex specifically targets and initiates translation of a subset of mRNAs involved in cell proliferation. In Aspergillus fumigatus (strain CBS 144.89 / FGSC A1163 / CEA10) (Neosartorya fumigata), this protein is Eukaryotic translation initiation factor 3 subunit L.